Here is a 422-residue protein sequence, read N- to C-terminus: Putative FBD-associated F-box protein At1g55030 (422 aa).

Residues 8–60 (TDMISQLPEPLILQILGSLPTKVAITTSVLSKQWQSHWKMMPKLEFDSFLRRL) enclose the F-box domain. LRR repeat units follow at residues 132–153 (TLET…VYLK), 154–175 (SLKT…INLL), and 180–201 (NLQD…TIAV). The FBD domain occupies 342–391 (EWNQPKNVPECLHHLEKFIWEGYKWKREEIEVAKYILKNTNRLKRAIFSL).

In Arabidopsis thaliana (Mouse-ear cress), this protein is Putative FBD-associated F-box protein At1g55030.